A 228-amino-acid polypeptide reads, in one-letter code: Phosphoglycolate phosphatase 1 (228 aa).

Asp8 (nucleophile) is an active-site residue. Asp8 and Asp10 together coordinate Mg(2+). Position 149 (Lys149) interacts with substrate. Residues Asp172 and Asp176 each coordinate Mg(2+).

The protein belongs to the archaeal SPP-like hydrolase family. The cofactor is Mg(2+).

The enzyme catalyses 2-phosphoglycolate + H2O = glycolate + phosphate. In terms of biological role, catalyzes the dephosphorylation of 2-phosphoglycolate. In Saccharolobus solfataricus (strain ATCC 35092 / DSM 1617 / JCM 11322 / P2) (Sulfolobus solfataricus), this protein is Phosphoglycolate phosphatase 1.